The sequence spans 176 residues: NAD(P)H-quinone oxidoreductase subunit 6, chloroplastic (176 aa).

The next 5 membrane-spanning stretches (helical) occupy residues 10 to 30, 33 to 53, 60 to 80, 95 to 115, and 152 to 172; these read ILVLFGGFVLLLGGLGVVLLT, IYSAFSLGLVLVCISLFYFLL, VAQLLIYVGAINVLIIFAVMF, IGDGFTLLLCITIPFSLMTTI, and FYLPFELISLILLVSLIGAIT.

The protein belongs to the complex I subunit 6 family. In terms of assembly, NDH is composed of at least 16 different subunits, 5 of which are encoded in the nucleus.

The protein resides in the plastid. Its subcellular location is the chloroplast thylakoid membrane. The catalysed reaction is a plastoquinone + NADH + (n+1) H(+)(in) = a plastoquinol + NAD(+) + n H(+)(out). It carries out the reaction a plastoquinone + NADPH + (n+1) H(+)(in) = a plastoquinol + NADP(+) + n H(+)(out). Functionally, NDH shuttles electrons from NAD(P)H:plastoquinone, via FMN and iron-sulfur (Fe-S) centers, to quinones in the photosynthetic chain and possibly in a chloroplast respiratory chain. The immediate electron acceptor for the enzyme in this species is believed to be plastoquinone. Couples the redox reaction to proton translocation, and thus conserves the redox energy in a proton gradient. This chain is NAD(P)H-quinone oxidoreductase subunit 6, chloroplastic (ndhG), found in Saccharum hybrid (Sugarcane).